A 1291-amino-acid polypeptide reads, in one-letter code: Cytoplasmic FMR1-interacting protein (1291 aa).

Residues 1269–1291 form a disordered region; sequence HPSVISSSSHYQDPQKLRQSMNN. Residues 1271–1291 are compositionally biased toward polar residues; that stretch reads SVISSSSHYQDPQKLRQSMNN.

This sequence belongs to the CYFIP family. In terms of assembly, interacts with Fmr1 and Rac1. Component of the WAVE complex composed of Hem/Kette, Scar/Wave and Cyfip where it binds through its C-terminus directly to Hem.

It is found in the cytoplasm. In terms of biological role, plays a role in guidance and morphology of central and peripheral axons and in synaptic morphology. Also required for formation of cell membrane protrusions and for bristle development. In Drosophila pseudoobscura pseudoobscura (Fruit fly), this protein is Cytoplasmic FMR1-interacting protein.